A 300-amino-acid chain; its full sequence is Ornithine carbamoyltransferase (300 aa).

Residues 49 to 52, Gln76, Arg100, and 127 to 130 contribute to the carbamoyl phosphate site; these read STRT and HPCQ. L-ornithine contacts are provided by residues Asn158, Asp218, and 222 to 223; that span reads SM. Carbamoyl phosphate is bound by residues 258 to 259 and Arg286; that span reads CL.

It belongs to the aspartate/ornithine carbamoyltransferase superfamily. OTCase family.

The protein resides in the cytoplasm. The enzyme catalyses carbamoyl phosphate + L-ornithine = L-citrulline + phosphate + H(+). Its pathway is amino-acid biosynthesis; L-arginine biosynthesis; L-arginine from L-ornithine and carbamoyl phosphate: step 1/3. In terms of biological role, reversibly catalyzes the transfer of the carbamoyl group from carbamoyl phosphate (CP) to the N(epsilon) atom of ornithine (ORN) to produce L-citrulline. The sequence is that of Ornithine carbamoyltransferase from Oleidesulfovibrio alaskensis (strain ATCC BAA-1058 / DSM 17464 / G20) (Desulfovibrio alaskensis).